Consider the following 118-residue polypeptide: MGTYAIIETGGEQLRVEPGRFYDARCFASLNPRILSANAKILIHRVLMIRRESTTNLGHPWLRNAIVRGRILHSCYGEKITIYKMHSKKKVRRKLGYRQKLVRFVVDSISSNGEEFFD.

The protein belongs to the bacterial ribosomal protein bL21 family. As to quaternary structure, part of the 50S ribosomal subunit.

It localises to the plastid. The protein resides in the chloroplast. Its function is as follows. This protein binds to 23S rRNA. This chain is Large ribosomal subunit protein bL21c, found in Psilotum nudum (Whisk fern).